The following is a 301-amino-acid chain: Homoserine O-acetyltransferase (301 aa).

C142 (acyl-thioester intermediate) is an active-site residue. Residues K163 and S192 each coordinate substrate. H235 functions as the Proton acceptor in the catalytic mechanism. Residue E237 is part of the active site. Position 249 (R249) interacts with substrate.

This sequence belongs to the MetA family.

It is found in the cytoplasm. It catalyses the reaction L-homoserine + acetyl-CoA = O-acetyl-L-homoserine + CoA. Its pathway is amino-acid biosynthesis; L-methionine biosynthesis via de novo pathway; O-acetyl-L-homoserine from L-homoserine: step 1/1. Its function is as follows. Transfers an acetyl group from acetyl-CoA to L-homoserine, forming acetyl-L-homoserine. The chain is Homoserine O-acetyltransferase from Bacillus cereus (strain AH187).